The sequence spans 507 residues: Maturase K (507 aa).

This sequence belongs to the intron maturase 2 family. MatK subfamily.

The protein localises to the plastid. Its subcellular location is the chloroplast. Usually encoded in the trnK tRNA gene intron. Probably assists in splicing its own and other chloroplast group II introns. The polypeptide is Maturase K (Umbellularia californica (California bay laurel)).